The primary structure comprises 84 residues: uncharacterized protein (84 aa).

The segment covering 34–54 (ATSTASSSAAKNTTSSSKNAA) has biased composition (low complexity). The interval 34–57 (ATSTASSSAAKNTTSSSKNAAPGM) is disordered. An N-linked (GlcNAc...) asparagine glycan is attached at asparagine 45. A helical transmembrane segment spans residues 66–83 (YGIIMAAFAAVSFVLGTG).

The protein resides in the endoplasmic reticulum membrane. This is an uncharacterized protein from Saccharomyces cerevisiae (strain ATCC 204508 / S288c) (Baker's yeast).